A 301-amino-acid polypeptide reads, in one-letter code: RNA polymerase II holoenzyme cyclin-like subunit (301 aa).

In terms of domain architecture, Cyclin N-terminal spans 53–142 (QQLIKLGKRT…LGECEFALIS (90 aa)).

Belongs to the cyclin family. Cyclin C subfamily. As to quaternary structure, component of the srb8-11 complex, a regulatory module of the Mediator complex.

The protein resides in the nucleus. Its function is as follows. Component of the srb8-11 complex. The srb8-11 complex is a regulatory module of the Mediator complex which is itself involved in regulation of basal and activated RNA polymerase II-dependent transcription. The srb8-11 complex may be involved in the transcriptional repression of a subset of genes regulated by Mediator. It may inhibit the association of the Mediator complex with RNA polymerase II to form the holoenzyme complex. The srb8-11 complex phosphorylates the C-terminal domain (CTD) of the largest subunit of RNA polymerase II. The protein is RNA polymerase II holoenzyme cyclin-like subunit (ssn8) of Aspergillus terreus (strain NIH 2624 / FGSC A1156).